We begin with the raw amino-acid sequence, 613 residues long: MPSGCSIRALWIINNQDTVVFSRRFPVVEKQWCSAYKTENENTGLDLPRLPTDQQISDSFTRRKRREGSTRGYGIRVAQSTKGSDSWVDDPITRHIISLCLTEEDDDDDDERNILWPIALHTKALYSILVLPLVEPKEMKDYVKLCRRSDCGPAVGEDLSLSSLLLNISSITGAFMVAHAFGDIISGDTVEPEVVVSVSPSVGGLFDSLTGSIGISSRAKPVAAPVASSNPSGAAITGATASDAPKAGSRLLDRDLLRNFIATAMPFGTPLDLSLSNISAMKANGFSSADPPPQELKQPAWKPYLYKGKQRLLFTIHETVSAAMYDRDEIPDNVSVAGQINCRAELEGLPDVSFPLAGLSTAHIEAISFHPCAQVPAHGIDKQNIVFQPPLGNFVLMRYQAGCGLGPPVKGFYQLSMVSEDEGAFLFKVHLMEGYKAPLSMEFCTITMPFPRRRIVAFDGTPSAGTVLTTEHSVEWRILGSGRSLSGKSLEATFPGTIKFSPLQSRRKGDGDDEESEDESAENVVNVEDFLVQKMNKDLPAAELEEPFCWQAYDYAKVSFKIVGASVSRMSIDTKSVNIYPTTKSPVEFSAQVTSGDYILWNTLGKAPSAAVV.

Residues 309–563 form the MHD domain; that stretch reads KQRLLFTIHE…DYAKVSFKIV (255 aa). Positions 501–522 are disordered; it reads SPLQSRRKGDGDDEESEDESAE. Acidic residues predominate over residues 511-521; that stretch reads GDDEESEDESA.

The protein belongs to the adaptor complexes medium subunit family. As to quaternary structure, probably part of the adaptor protein complex 5 (AP-5).

It localises to the cytoplasmic vesicle membrane. This Arabidopsis thaliana (Mouse-ear cress) protein is AP-5 complex subunit mu (AP5M).